Reading from the N-terminus, the 517-residue chain is Cell division cycle protein 73 (517 aa).

The span at 124–135 (SEPEAKKPRLDG) shows a compositional bias: basic and acidic residues. Disordered regions lie at residues 124-159 (SEPE…SAAK) and 306-326 (GHHA…LAKP). A compositionally biased stretch (pro residues) spans 315-324 (DAPPGRPPLA).

This sequence belongs to the CDC73 family. In terms of assembly, component of the PAF1 complex which consists of at least cdc-73, ctr-9, leo-1, pafo-1 and rtfo-1.

It localises to the nucleus. Its function is as follows. Component of the PAF1 complex which is a multifunctional complex involved in transcription initiation via genetic interactions with TATA-binding proteins, elongation and transcription-coupled histone modification. This is Cell division cycle protein 73 from Caenorhabditis elegans.